The primary structure comprises 268 residues: TodF product hydratase (268 aa).

The protein belongs to the hydratase/decarboxylase family.

Its pathway is xenobiotic degradation; toluene degradation. Its function is as follows. Converts the product of 2-hydroxy-6-oxo-2,4-heptadienoate hydrolase. This Pseudomonas putida (strain ATCC 700007 / DSM 6899 / JCM 31910 / BCRC 17059 / LMG 24140 / F1) protein is TodF product hydratase (todJ).